Consider the following 244-residue polypeptide: Uridylate kinase (244 aa).

Residue 19–22 participates in ATP binding; sequence KVSG. The interval 27–32 is involved in allosteric activation by GTP; the sequence is GERGFG. A UMP-binding site is contributed by Gly61. Residues Gly62 and Arg66 each coordinate ATP. UMP is bound by residues Asp80 and 141-148; that span reads IGSPFFTT. The ATP site is built by Thr168, Gln169, Tyr174, and Asp177.

The protein belongs to the UMP kinase family. Homohexamer.

It is found in the cytoplasm. The enzyme catalyses UMP + ATP = UDP + ADP. The protein operates within pyrimidine metabolism; CTP biosynthesis via de novo pathway; UDP from UMP (UMPK route): step 1/1. Its activity is regulated as follows. Allosterically activated by GTP. Inhibited by UTP. Catalyzes the reversible phosphorylation of UMP to UDP. In Anaplasma phagocytophilum (strain HZ), this protein is Uridylate kinase.